The chain runs to 971 residues: Zinc finger CCCH domain-containing protein 7A (971 aa).

TPR repeat units follow at residues 43–76, 89–122, and 124–156; these read VRNL…ADYA, EKLY…NASN, and KALY…VPQD. At T210 the chain carries Phosphothreonine. 2 C3H1-type zinc fingers span residues 634–656 and 769–797; these read LCRH…HSLV and PLQF…HSPE. Residues 857 to 881 form a C2H2-type zinc finger; it reads FHCWMCGKNCNSEKQWQGHISSEKH. The C3H1-type 3 zinc finger occupies 906-928; sequence ICDRYMNGTCPEGNSCKFAHGNA. Positions 924–952 form a coiled coil; it reads AHGNAELHEWEERRDALKMKLNKARKDHL.

The protein resides in the nucleus. May be a specific regulator of miRNA biogenesis. Binds to microRNAs MIR7-1, MIR16-2 and MIR29A hairpins recognizing the 3'-ATA(A/T)-5' motif in the apical loop. This Homo sapiens (Human) protein is Zinc finger CCCH domain-containing protein 7A (ZC3H7A).